Here is a 1006-residue protein sequence, read N- to C-terminus: Phosphatidylinositol-3,5-bisphosphate 3-phosphatase MTMR3 (1006 aa).

The segment covering 1–10 has biased composition (low complexity); that stretch reads MTVTSSAAID. The interval 1–29 is disordered; that stretch reads MTVTSSAAIDIGGGGGGRRSDRLDSDRTS. A compositionally biased stretch (basic and acidic residues) spans 18–29; it reads RRSDRLDSDRTS. The Myotubularin phosphatase domain maps to 224-630; the sequence is AWKFSEAVDE…INLRVWHEVF (407 aa). A 1,2-diacyl-sn-glycero-3-phospho-(1D-myo-inositol-3,5-bisphosphate) is bound by residues N377, N402, and I403. 3 residues coordinate a 1,2-diacyl-sn-glycero-3-phospho-(1D-myo-inositol-3-phosphate): N377, N402, and I403. The active-site Phosphocysteine intermediate is the C463. A 1,2-diacyl-sn-glycero-3-phospho-(1D-myo-inositol-3,5-bisphosphate) is bound by residues S464, D465, G466, W467, D468, R469, K505, and R509. S464, D465, G466, W467, D468, and R469 together coordinate a 1,2-diacyl-sn-glycero-3-phospho-(1D-myo-inositol-3-phosphate). Residue R509 participates in a 1,2-diacyl-sn-glycero-3-phospho-(1D-myo-inositol-3-phosphate) binding. Positions 641-705 are disordered; it reads FSPKEERPLS…PSDNTNSLPM (65 aa). Residues 651-705 are compositionally biased toward polar residues; it reads GCTTPMNTSTSTNLVKSKSSESINSLNVDGSAKESSQQHPTCSTTPSDNTNSLPM. The segment at 818 to 883 adopts an FYVE-type zinc-finger fold; it reads EGESGHCAYC…ACDSCYDSMH (66 aa). Zn(2+) is bound by residues C824, C827, C845, C848, C853, C856, C875, and C878. Residues 886–1006 are disordered; that stretch reads DLKLSSSSTT…DVLDVNEQPL (121 aa). Composition is skewed to low complexity over residues 890-901 and 913-926; these read SSSSTTTTSSST and DNNS…VSEN. Basic and acidic residues-rich tracts occupy residues 933-954 and 976-985; these read VEEK…ETKC and HSRDPLKSID.

This sequence belongs to the protein-tyrosine phosphatase family. Non-receptor class myotubularin subfamily. As to expression, expressed in the body wall muscle and in eggs. Expressed in head neurons. Expressed in the intestine. Expressed in pharyngeal cells, vulval muscle cells and cells of the tail region.

The protein resides in the cytoplasm. Its subcellular location is the membrane. The catalysed reaction is a 1,2-diacyl-sn-glycero-3-phospho-(1D-myo-inositol-3,5-bisphosphate) + H2O = a 1,2-diacyl-sn-glycero-3-phospho-(1D-myo-inositol-5-phosphate) + phosphate. It catalyses the reaction a 1,2-diacyl-sn-glycero-3-phospho-(1D-myo-inositol-3-phosphate) + H2O = a 1,2-diacyl-sn-glycero-3-phospho-(1D-myo-inositol) + phosphate. The enzyme catalyses 1,2-dihexadecanoyl-sn-glycero-3-phospho-(1D-myo-inositol-3-phosphate) + H2O = 1,2-dihexadecanoyl-sn-glycero-3-phospho-(1D-myo-inositol) + phosphate. It carries out the reaction 1,2-dihexadecanoyl-sn-glycero-3-phospho-(1D-myo-inositol-3,5-phosphate) + H2O = 1,2-dihexadecanoyl-sn-glycero-3-phospho-(1D-myo-inositol-5-phosphate) + phosphate. The catalysed reaction is 1,2-dioctanoyl-sn-glycero-3-phospho-(1-D-myo-inositol-3-phosphate) + H2O = 1,2-dioctanoyl-sn-glycero-3-phospho-(1D-myo-inositol) + phosphate. Its activity is regulated as follows. Inhibited by sodium vanadate and peroxide. In terms of biological role, preferentially dephosphorylates phosphatidylinositol 3-phosphate (PI3P), and has some activity towards phosphatidylinositol 3,5-bisphosphate (PI35P). Positively regulates autophagy and is recruited to autophagosomes by PI3P where it catalyzes PI3P turnover to promote autophagosome maturation. Thought to have a role in maintenance of muscle function. Involved in locomotion and lifespan determination. This is Phosphatidylinositol-3,5-bisphosphate 3-phosphatase MTMR3 from Caenorhabditis elegans.